A 466-amino-acid polypeptide reads, in one-letter code: NADPH:adrenodoxin oxidoreductase, mitochondrial (466 aa).

Residues A40, E61, L69, and L105 each coordinate FAD. NADP(+) is bound by residues 176-179 (QGNV), 220-221 (RR), and E232. FAD contacts are provided by residues W379 and 386 to 388 (GVI). G386 contacts NADP(+).

This sequence belongs to the ferredoxin--NADP reductase type 1 family. Requires FAD as cofactor. In terms of tissue distribution, expressed predominantly in prothoracic gland of the larval ring gland and nurse cells of the adult ovary. Low expression is all adult tissues examined.

Its subcellular location is the mitochondrion inner membrane. It catalyses the reaction 2 reduced [adrenodoxin] + NADP(+) + H(+) = 2 oxidized [adrenodoxin] + NADPH. It participates in steroid metabolism; cholesterol metabolism. Required for synthesis of steroid hormones, for olfactory sensory behavior and completion of the second larval molt (a steroid mediated developmental transition) and pupariation. The polypeptide is NADPH:adrenodoxin oxidoreductase, mitochondrial (dare) (Drosophila melanogaster (Fruit fly)).